Consider the following 187-residue polypeptide: dITP/XTP pyrophosphatase (187 aa).

Substrate is bound at residue 7-12; it reads TNNPYK. Mg(2+) contacts are provided by glutamate 36 and aspartate 65. The active-site Proton acceptor is the aspartate 65. Substrate contacts are provided by residues threonine 66, 140-143, lysine 163, and 168-169; these read FGYD and HR.

This sequence belongs to the HAM1 NTPase family. Homodimer. Requires Mg(2+) as cofactor.

The catalysed reaction is XTP + H2O = XMP + diphosphate + H(+). It catalyses the reaction dITP + H2O = dIMP + diphosphate + H(+). The enzyme catalyses ITP + H2O = IMP + diphosphate + H(+). Its function is as follows. Pyrophosphatase that catalyzes the hydrolysis of nucleoside triphosphates to their monophosphate derivatives, with a high preference for the non-canonical purine nucleotides XTP (xanthosine triphosphate), dITP (deoxyinosine triphosphate) and ITP. Seems to function as a house-cleaning enzyme that removes non-canonical purine nucleotides from the nucleotide pool, thus preventing their incorporation into DNA/RNA and avoiding chromosomal lesions. The chain is dITP/XTP pyrophosphatase from Pyrobaculum aerophilum (strain ATCC 51768 / DSM 7523 / JCM 9630 / CIP 104966 / NBRC 100827 / IM2).